Here is a 466-residue protein sequence, read N- to C-terminus: MFIPSIYLHQQLHYCKTAILNWSRKMALSRQKFTFERLRRFTLPEGKKQTFLWDADVTTLACRATSGAKAFVFQSVYAGKTLRMTIGNINDWKIDDARAEARRLQTLIDTGIDPRIAKAVKIAEAESLQAESRKTKVTFSVAWEDYLQELRTGISAKTKRPYSTRYIADHINLSSRGGESKKRGQGPTSAGPLASLLNLPLSELTPDYIAAWLSTERQNRPTVTAHAYRLLRAFIKWSNYQKKYQGIIPGDLAQDYNVRKMVPVSASKADDCLQKEQLKSWFSAVRSLNNPIASAYLQVLLLTGARREEIASLRWSDVDFKWSSMRIKDKIEGERIIPLTPYVSELLNVLAQSPNSDVNKEGWVFRSNSKSGKIIEPRSAHNRALVLAELPHISLHGLRRSFGTLAEWVEVPTGIVAQIMGHKPSALAEKHYRRRPLDLLRKWHEKIETWILNEAGITIKNNVDMR.

The 106-residue stretch at lysine 134–asparagine 239 folds into the Core-binding (CB) domain. In terms of domain architecture, Tyr recombinase spans lysine 268 to glutamate 445. Active-site residues include arginine 306, lysine 328, histidine 396, arginine 399, and histidine 422. Tyrosine 432 acts as the O-(3'-phospho-DNA)-tyrosine intermediate in catalysis.

It belongs to the 'phage' integrase family.

Integrase is necessary for integration of the phage into the host genome by site-specific recombination. In conjunction with excisionase, integrase is also necessary for excision of the prophage from the host genome. The protein is Prophage integrase IntF (intF) of Escherichia coli (strain K12).